Reading from the N-terminus, the 173-residue chain is Ribosome maturation factor RimM (173 aa).

One can recognise a PRC barrel domain in the interval 98–170; it reads EDEYYWCDLL…RMTVSLPEGL (73 aa).

It belongs to the RimM family. Binds ribosomal protein uS19.

Its subcellular location is the cytoplasm. Its function is as follows. An accessory protein needed during the final step in the assembly of 30S ribosomal subunit, possibly for assembly of the head region. Essential for efficient processing of 16S rRNA. May be needed both before and after RbfA during the maturation of 16S rRNA. It has affinity for free ribosomal 30S subunits but not for 70S ribosomes. The polypeptide is Ribosome maturation factor RimM (Geotalea uraniireducens (strain Rf4) (Geobacter uraniireducens)).